The chain runs to 712 residues: MSNPQDQLSNDLANASISGDQSKQPQQQQPQQQQPYFNPNQAQAFVPTGGYQQFQPQQQQQYGGYQQNYTQYQAGGYQQNYNNRGGYQQNYNNRGGYQQNYNNRGGYQQQQQQQYQAYNPNQQYGGYQAYNPQQQQQQQTQSQGMSLADFQKQKAEQQASLNKPAVKKTLKLASSSGIKLANATKKVDTAKPAASKEASPAPKDEEASAEPEAKKESTPVPASSSPAPAAADSTPAPVKKESTPTPSVASKSAPVSASASVVTADALAKEQEDEVDEEVVKDMFGGKDHVSIIFMGHVDAGKSTMGGNILYLTGSVDKRTVEKYEREAKDAGRQGWYLSWVMDTNKEERNDGKTIEVGKAYFETDKRRYTILDAPGHKMYVSEMIGGASQADVGILVISARKGEYETGFEKGGQTREHALLAKTQGVNKIIVVVNKMDDPTVNWSKERYQECTTKLGVFLKGIGYNKDDIINMPVSGYTGAGLKDRVNPKDCPWYEGPSLLEYLDNMDTMNRKINGPFMMPVSGKMKDLGTVVEGKIESGHVKKGTNLILMPNKTPVEVLTIYNETEQEADTAFSGEQVRLKIKGVEEEDLQPGYVLTSPKNPVKTVTKFEAQIAIVELKSILSNGFSCVMHLHTAIEEVKFVELKHKLEKGTNRKSKKPPAFAKKGMKIIAILEVSEPVCAETYKDYPQLGRFTLRDQGTTIAIGKITKLL.

Positions 1-23 (MSNPQDQLSNDLANASISGDQSK) are enriched in polar residues. 4 disordered regions span residues 1–64 (MSNP…QYGG), 76–115 (GYQQ…QQQY), 132–162 (PQQQ…ASLN), and 184–256 (TKKV…APVS). A several sort of repeats region spans residues 16–143 (SISGDQSKQP…QQQQQQTQSQ (128 aa)). 2 stretches are compositionally biased toward low complexity: residues 24-35 (QPQQQQPQQQQP) and 48-64 (TGGY…QYGG). 2 stretches are compositionally biased toward low complexity: residues 132 to 141 (PQQQQQQQTQ) and 190 to 201 (AKPAASKEASPA). Positions 144 to 282 (GMSLADFQKQ…DEVDEEVVKD (139 aa)) are charged. A compositionally biased stretch (basic and acidic residues) spans 202–217 (PKDEEASAEPEAKKES). Residues 218-256 (TPVPASSSPAPAAADSTPAPVKKESTPTPSVASKSAPVS) show a composition bias toward low complexity. In terms of domain architecture, tr-type G spans 287–512 (KDHVSIIFMG…YLDNMDTMNR (226 aa)). The segment at 296 to 303 (GHVDAGKS) is G1. Residue 296–303 (GHVDAGKS) coordinates GTP. A G2 region spans residues 352-356 (GKTIE). A Phosphothreonine modification is found at Thr-370. The interval 373–376 (DAPG) is G3. Residues 373 to 377 (DAPGH) and 435 to 438 (NKMD) each bind GTP. Residues 435 to 438 (NKMD) are G4. Residues 476–478 (SGY) form a G5 region.

The protein belongs to the TRAFAC class translation factor GTPase superfamily. Classic translation factor GTPase family. ERF3 subfamily.

Its subcellular location is the cytoplasm. Its function is as follows. Involved in translation termination. Stimulates the activity of ERF1. Binds guanine nucleotides. In Candida maltosa (Yeast), this protein is Eukaryotic peptide chain release factor GTP-binding subunit (SUP35).